The chain runs to 369 residues: Glutamate 5-kinase (369 aa).

An ATP-binding site is contributed by lysine 9. Positions 49, 136, and 148 each coordinate substrate. Residues 168-169 and 210-216 each bind ATP; these read TD and TGGMLTK. The PUA domain maps to 275-355; sequence QGEIYVDQGA…KGVVIHRDDW (81 aa).

The protein belongs to the glutamate 5-kinase family.

The protein resides in the cytoplasm. The catalysed reaction is L-glutamate + ATP = L-glutamyl 5-phosphate + ADP. It functions in the pathway amino-acid biosynthesis; L-proline biosynthesis; L-glutamate 5-semialdehyde from L-glutamate: step 1/2. Functionally, catalyzes the transfer of a phosphate group to glutamate to form L-glutamate 5-phosphate. The sequence is that of Glutamate 5-kinase from Streptococcus gordonii (strain Challis / ATCC 35105 / BCRC 15272 / CH1 / DL1 / V288).